The following is a 47-amino-acid chain: Large ribosomal subunit protein bL36A (47 aa).

Belongs to the bacterial ribosomal protein bL36 family.

This chain is Large ribosomal subunit protein bL36A, found in Yersinia enterocolitica serotype O:8 / biotype 1B (strain NCTC 13174 / 8081).